Reading from the N-terminus, the 520-residue chain is Maturase K (520 aa).

Belongs to the intron maturase 2 family. MatK subfamily.

The protein localises to the plastid. Its subcellular location is the chloroplast. Usually encoded in the trnK tRNA gene intron. Probably assists in splicing its own and other chloroplast group II introns. In Liriope muscari (Big blue lilyturf), this protein is Maturase K.